The following is a 98-amino-acid chain: Large ribosomal subunit protein uL23 (98 aa).

This sequence belongs to the universal ribosomal protein uL23 family. In terms of assembly, part of the 50S ribosomal subunit. Contacts protein L29, and trigger factor when it is bound to the ribosome.

In terms of biological role, one of the early assembly proteins it binds 23S rRNA. One of the proteins that surrounds the polypeptide exit tunnel on the outside of the ribosome. Forms the main docking site for trigger factor binding to the ribosome. The chain is Large ribosomal subunit protein uL23 from Roseobacter denitrificans (strain ATCC 33942 / OCh 114) (Erythrobacter sp. (strain OCh 114)).